We begin with the raw amino-acid sequence, 268 residues long: Putative pyruvate, phosphate dikinase regulatory protein (268 aa).

Residue 147 to 154 participates in ADP binding; it reads GLSRTSKT.

Belongs to the pyruvate, phosphate/water dikinase regulatory protein family. PDRP subfamily.

The enzyme catalyses N(tele)-phospho-L-histidyl/L-threonyl-[pyruvate, phosphate dikinase] + ADP = N(tele)-phospho-L-histidyl/O-phospho-L-threonyl-[pyruvate, phosphate dikinase] + AMP + H(+). It carries out the reaction N(tele)-phospho-L-histidyl/O-phospho-L-threonyl-[pyruvate, phosphate dikinase] + phosphate + H(+) = N(tele)-phospho-L-histidyl/L-threonyl-[pyruvate, phosphate dikinase] + diphosphate. Functionally, bifunctional serine/threonine kinase and phosphorylase involved in the regulation of the pyruvate, phosphate dikinase (PPDK) by catalyzing its phosphorylation/dephosphorylation. This is Putative pyruvate, phosphate dikinase regulatory protein from Clostridium beijerinckii (strain ATCC 51743 / NCIMB 8052) (Clostridium acetobutylicum).